The chain runs to 378 residues: MGVLRLLVLCTLAACCVARSPPAPPLPNAPFAPLRPLGCNDSEVLAVAGFALQNINRVQKDGYMLTLNRVHDARVHRQEDMGSLFYLMLDVLETGCHVLSRKALKDCGPRIFYETVHGQCKAMFHVNKPRRVLYLPAYNCTLRPVSKRKIHSMCPDCPHPVDLSAPSVLEAATESLAKFNSENPSKQYALVKVTKATTQWVVGPSYFVEYLIKESPCTQSQDSCSLQASDSEPVGLCQGSLIKSPGVPPQRFKKTVTVSCEFFESQDQVPGGENPADTQDAKKLPQKNTAPTSSPSITAPRGSIQHLPEQEEPEDSKGKSPEEPFPVQLDLTTNPQGDTLDVSFLYLEPEEKKLVVLPFPGKEQRSPECPGPEKQRTP.

Residues 1 to 18 (MGVLRLLVLCTLAACCVA) form the signal peptide. Cystatin fetuin-B-type domains lie at 28–141 (NAPF…YNCT) and 152–261 (SMCP…VSCE). Residue Asn-40 is glycosylated (N-linked (GlcNAc...) asparagine). 5 disulfide bridges follow: Cys-96-Cys-107, Cys-120-Cys-140, Cys-154-Cys-157, Cys-217-Cys-224, and Cys-237-Cys-260. Asn-139 carries an N-linked (GlcNAc...) asparagine glycan. 2 disordered regions span residues 266–338 (QDQV…PQGD) and 357–378 (LPFP…QRTP). Over residues 286 to 297 (QKNTAPTSSPSI) the composition is skewed to polar residues. O-linked (GalNAc...) threonine glycans are attached at residues Thr-289 and Thr-292. Ser-316 bears the Phosphoserine mark. The segment covering 362–378 (KEQRSPECPGPEKQRTP) has biased composition (basic and acidic residues).

This sequence belongs to the fetuin family. Liver.

The protein localises to the secreted. Its function is as follows. Protease inhibitor required for egg fertilization. Required to prevent premature zona pellucida hardening before fertilization, probably by inhibiting the protease activity of ASTL, a protease that mediates the cleavage of ZP2 and triggers zona pellucida hardening. The sequence is that of Fetuin-B (Fetub) from Rattus norvegicus (Rat).